Reading from the N-terminus, the 437-residue chain is Citrate synthase (437 aa).

Catalysis depends on residues H316 and D372.

It belongs to the citrate synthase family. In terms of assembly, homohexamer.

The catalysed reaction is oxaloacetate + acetyl-CoA + H2O = citrate + CoA + H(+). Its pathway is carbohydrate metabolism; tricarboxylic acid cycle; isocitrate from oxaloacetate: step 1/2. With respect to regulation, weakly inhibited by ATP (apparent Ki = 10 mm). The chain is Citrate synthase (gltA) from Corynebacterium glutamicum (strain ATCC 13032 / DSM 20300 / JCM 1318 / BCRC 11384 / CCUG 27702 / LMG 3730 / NBRC 12168 / NCIMB 10025 / NRRL B-2784 / 534).